The following is a 352-amino-acid chain: Uroporphyrinogen decarboxylase (352 aa).

Substrate contacts are provided by residues 27 to 31, aspartate 77, tyrosine 154, threonine 209, and histidine 325; that span reads RQAGR.

Belongs to the uroporphyrinogen decarboxylase family. As to quaternary structure, homodimer.

The protein localises to the cytoplasm. The catalysed reaction is uroporphyrinogen III + 4 H(+) = coproporphyrinogen III + 4 CO2. It functions in the pathway porphyrin-containing compound metabolism; protoporphyrin-IX biosynthesis; coproporphyrinogen-III from 5-aminolevulinate: step 4/4. Catalyzes the decarboxylation of four acetate groups of uroporphyrinogen-III to yield coproporphyrinogen-III. The polypeptide is Uroporphyrinogen decarboxylase (Legionella pneumophila subsp. pneumophila (strain Philadelphia 1 / ATCC 33152 / DSM 7513)).